Reading from the N-terminus, the 353-residue chain is DNA polymerase IV (353 aa).

The UmuC domain maps to 4-185 (IIHVDMDCFF…LPLSKIPGVG (182 aa)). Aspartate 8 and aspartate 103 together coordinate Mg(2+). Glutamate 104 is a catalytic residue.

It belongs to the DNA polymerase type-Y family. In terms of assembly, monomer. The cofactor is Mg(2+).

The protein localises to the cytoplasm. The enzyme catalyses DNA(n) + a 2'-deoxyribonucleoside 5'-triphosphate = DNA(n+1) + diphosphate. In terms of biological role, poorly processive, error-prone DNA polymerase involved in untargeted mutagenesis. Copies undamaged DNA at stalled replication forks, which arise in vivo from mismatched or misaligned primer ends. These misaligned primers can be extended by PolIV. Exhibits no 3'-5' exonuclease (proofreading) activity. May be involved in translesional synthesis, in conjunction with the beta clamp from PolIII. The sequence is that of DNA polymerase IV from Serratia proteamaculans (strain 568).